We begin with the raw amino-acid sequence, 358 residues long: Snurportin-1 (358 aa).

M1 bears the N-acetylmethionine mark. 2 disordered regions span residues 1-39 and 69-89; these read MEEL…SSLE and DWTG…EMDL. Residues 1–65 form a necessary for interaction with KPNB1 and m3G-cap U1 and U5 snRNP import receptor activity region; sequence MEELSQALAS…LDYVNHARRL (65 aa). Positions 1–160 are necessary for interaction with XPO1; it reads MEELSQALAS…NRFSSLLPGG (160 aa). Composition is skewed to polar residues over residues 7–22 and 30–39; these read ALAS…NSTA and QYKSKYSSLE. Residues 11-73 enclose the IBB domain; sequence SFSVSQELNS…RLAEDDWTGM (63 aa). A Phosphoserine modification is found at S75. The segment at 128 to 130 is interaction with m3G-cap structure; that stretch reads GKR. The tract at residues 210–329 is necessary for binding to the m3G-cap structure; that stretch reads MNSKLPEEEG…DTKEKLTHKA (120 aa). A compositionally biased stretch (basic and acidic residues) spans 315–341; that stretch reads KRSQEDTKEKLTHKASENGHYELEHLS. Positions 315–358 are disordered; that stretch reads KRSQEDTKEKLTHKASENGHYELEHLSTPKLRSPPHSSESLMDS. The segment covering 349-358 has biased composition (polar residues); the sequence is PHSSESLMDS. Residue S351 is modified to Phosphoserine.

This sequence belongs to the snurportin family. Component of an import snRNP complex composed of KPNB1, SNUPN, SMN1 and ZNF259. Component of a nuclear export receptor complex composed of KPNB1, Ran, SNUPN and XPO1. Found in a trimeric export complex with SNUPN, Ran and XPO1. Interacts (via IBB domain) with KPNB1; the interaction is direct. Interacts with DDX20, IPO7, SMN1, SNRPB and XPO1. Interacts directly with XPO1. Its interaction with XPO1 and binding to m3G-cap U snRNPs appears to be mutually exclusive. Can form homomers.

Its subcellular location is the nucleus. It is found in the cytoplasm. Functionally, functions as an U snRNP-specific nuclear import adapter. Involved in the trimethylguanosine (m3G)-cap-dependent nuclear import of U snRNPs. Binds specifically to the terminal m3G-cap U snRNAs. The sequence is that of Snurportin-1 (Snupn) from Rattus norvegicus (Rat).